A 598-amino-acid chain; its full sequence is Arginine--tRNA ligase (598 aa).

The short motif at 135–145 (ANPTGPIHIGG) is the 'HIGH' region element. The interval 229–248 (VDGGTDEKGEPLGEGDSEQR) is disordered. Over residues 231 to 248 (GGTDEKGEPLGEGDSEQR) the composition is skewed to basic and acidic residues.

Belongs to the class-I aminoacyl-tRNA synthetase family. In terms of assembly, monomer.

The protein resides in the cytoplasm. The catalysed reaction is tRNA(Arg) + L-arginine + ATP = L-arginyl-tRNA(Arg) + AMP + diphosphate. The polypeptide is Arginine--tRNA ligase (Bifidobacterium animalis subsp. lactis (strain AD011)).